The following is a 379-amino-acid chain: Dual-specificity RNA methyltransferase RlmN (379 aa).

The active-site Proton acceptor is the E95. Residues 101–345 (EETRGTLCVS…TTVRKTRGDD (245 aa)) form the Radical SAM core domain. C108 and C350 form a disulfide bridge. 3 residues coordinate [4Fe-4S] cluster: C115, C119, and C122. S-adenosyl-L-methionine contacts are provided by residues 176–177 (GE), S208, 230–232 (SLH), and N307. The active-site S-methylcysteine intermediate is the C350.

Belongs to the radical SAM superfamily. RlmN family. The cofactor is [4Fe-4S] cluster.

The protein localises to the cytoplasm. It catalyses the reaction adenosine(2503) in 23S rRNA + 2 reduced [2Fe-2S]-[ferredoxin] + 2 S-adenosyl-L-methionine = 2-methyladenosine(2503) in 23S rRNA + 5'-deoxyadenosine + L-methionine + 2 oxidized [2Fe-2S]-[ferredoxin] + S-adenosyl-L-homocysteine. It carries out the reaction adenosine(37) in tRNA + 2 reduced [2Fe-2S]-[ferredoxin] + 2 S-adenosyl-L-methionine = 2-methyladenosine(37) in tRNA + 5'-deoxyadenosine + L-methionine + 2 oxidized [2Fe-2S]-[ferredoxin] + S-adenosyl-L-homocysteine. Its function is as follows. Specifically methylates position 2 of adenine 2503 in 23S rRNA and position 2 of adenine 37 in tRNAs. m2A2503 modification seems to play a crucial role in the proofreading step occurring at the peptidyl transferase center and thus would serve to optimize ribosomal fidelity. In Burkholderia ambifaria (strain MC40-6), this protein is Dual-specificity RNA methyltransferase RlmN.